Consider the following 190-residue polypeptide: Threonylcarbamoyl-AMP synthase (190 aa).

The YrdC-like domain occupies 7–190 (ADAISFIVDV…ALTGELFRQG (184 aa)).

Belongs to the SUA5 family. TsaC subfamily.

The protein resides in the cytoplasm. The catalysed reaction is L-threonine + hydrogencarbonate + ATP = L-threonylcarbamoyladenylate + diphosphate + H2O. In terms of biological role, required for the formation of a threonylcarbamoyl group on adenosine at position 37 (t(6)A37) in tRNAs that read codons beginning with adenine. Catalyzes the conversion of L-threonine, HCO(3)(-)/CO(2) and ATP to give threonylcarbamoyl-AMP (TC-AMP) as the acyladenylate intermediate, with the release of diphosphate. This is Threonylcarbamoyl-AMP synthase from Cronobacter sakazakii (strain ATCC BAA-894) (Enterobacter sakazakii).